The following is a 113-amino-acid chain: Beta-microseminoprotein (113 aa).

The N-terminal stretch at 1 to 20 is a signal peptide; it reads MEAWLGSLLFLATMVIASKA. 5 disulfide bridges follow: cysteine 22/cysteine 69, cysteine 38/cysteine 61, cysteine 56/cysteine 92, cysteine 59/cysteine 68, and cysteine 83/cysteine 106.

It belongs to the beta-microseminoprotein family. Homodimer; Interacts with PI16.

Its subcellular location is the secreted. The polypeptide is Beta-microseminoprotein (Msmb) (Mus musculus (Mouse)).